We begin with the raw amino-acid sequence, 607 residues long: Pescadillo homolog (607 aa).

The interval 301–341 (ANVVEQSEKTTEDADEEPETEENLDEFKPADGADNEDSKSL) is disordered. Positions 313 to 324 (DADEEPETEENL) are enriched in acidic residues. Residues 325–339 (DEFKPADGADNEDSK) show a composition bias toward basic and acidic residues. One can recognise a BRCT domain in the interval 348–441 (SNTSLFSNFT…ILERTDLYAC (94 aa)). Residues 497-604 (ENVEQIDDAE…RDIEKRKKLK (108 aa)) are a coiled coil. Residues 531-607 (QNSKSAKKTK…EKRKKLKVEN (77 aa)) are disordered. Composition is skewed to basic and acidic residues over residues 544 to 561 (RDTL…KELS) and 595 to 607 (RDIE…KVEN).

The protein belongs to the pescadillo family. Component of the NOP7 complex, composed of erb1/SPBC4F6.13c, ppp1/SPBC19F5.05c and ytm1/SPAC890.04c. Within the NOP7 complex erb1/SPBC4F6.13c appears to interact directly with ppp1/SPBC19F5.05c and ytm1/SPAC890.04c. The NOP7 complex also associates with the 66S pre-ribosome.

The protein localises to the nucleus. It is found in the nucleoplasm. Its subcellular location is the nucleolus. Functionally, component of the NOP7 complex, which is required for maturation of the 25S and 5.8S ribosomal RNAs and formation of the 60S ribosome. This is Pescadillo homolog (ppp1) from Schizosaccharomyces pombe (strain 972 / ATCC 24843) (Fission yeast).